The sequence spans 425 residues: Podosporapepsin (425 aa).

Positions 1-28 (MVSLTDLFLASLLVPTSPWLCLPPRIDT) are cleaved as a signal peptide. A propeptide spans 29-91 (IDQRGGRVTL…QEEAFARIKR (63 aa)) (activation peptide). The 312-residue stretch at 108–419 (YVTPVTIGTP…GTNPPRIGFA (312 aa)) folds into the Peptidase A1 domain. Asp-126 is an active-site residue. 2 N-linked (GlcNAc...) asparagine glycosylation sites follow: Asn-184 and Asn-273. Residue Asp-310 is part of the active site. Cys-346 and Cys-381 are joined by a disulfide. An N-linked (GlcNAc...) asparagine glycan is attached at Asn-370.

Belongs to the peptidase A1 family.

The sequence is that of Podosporapepsin (PAPA) from Podospora anserina (Pleurage anserina).